A 126-amino-acid chain; its full sequence is Urease subunit beta (126 aa).

The protein belongs to the urease beta subunit family. In terms of assembly, heterotrimer of UreA (gamma), UreB (beta) and UreC (alpha) subunits. Three heterotrimers associate to form the active enzyme.

Its subcellular location is the cytoplasm. The catalysed reaction is urea + 2 H2O + H(+) = hydrogencarbonate + 2 NH4(+). It functions in the pathway nitrogen metabolism; urea degradation; CO(2) and NH(3) from urea (urease route): step 1/1. The sequence is that of Urease subunit beta from Gloeothece citriformis (strain PCC 7424) (Cyanothece sp. (strain PCC 7424)).